Consider the following 367-residue polypeptide: 2-aminoethylphosphonate--pyruvate transaminase (367 aa).

At Lys194 the chain carries N6-(pyridoxal phosphate)lysine.

The protein belongs to the class-V pyridoxal-phosphate-dependent aminotransferase family. PhnW subfamily. Homodimer. The cofactor is pyridoxal 5'-phosphate.

The enzyme catalyses (2-aminoethyl)phosphonate + pyruvate = phosphonoacetaldehyde + L-alanine. Functionally, involved in phosphonate degradation. This chain is 2-aminoethylphosphonate--pyruvate transaminase, found in Salmonella schwarzengrund (strain CVM19633).